The sequence spans 196 residues: N-(5'-phosphoribosyl)anthranilate isomerase (196 aa).

It belongs to the TrpF family.

The catalysed reaction is N-(5-phospho-beta-D-ribosyl)anthranilate = 1-(2-carboxyphenylamino)-1-deoxy-D-ribulose 5-phosphate. It participates in amino-acid biosynthesis; L-tryptophan biosynthesis; L-tryptophan from chorismate: step 3/5. This chain is N-(5'-phosphoribosyl)anthranilate isomerase, found in Nitratiruptor sp. (strain SB155-2).